A 244-amino-acid chain; its full sequence is Nicotinamidase 1 (244 aa).

The protein belongs to the isochorismatase family. As to expression, expressed in roots and stems, and at lower levels in flowers, siliques and leaves.

It carries out the reaction nicotinamide + H2O = nicotinate + NH4(+). Its pathway is cofactor biosynthesis; nicotinate biosynthesis; nicotinate from nicotinamide: step 1/1. In terms of biological role, catalyzes the deamidation of nicotinamide, an early step in the NAD(+) salvage pathway. Prevents the accumulation of intracellular nicotinamide, a known inhibitor of poly(ADP-ribose) polymerases (PARP enzymes). The protein is Nicotinamidase 1 of Arabidopsis thaliana (Mouse-ear cress).